We begin with the raw amino-acid sequence, 408 residues long: tRNA-specific 2-thiouridylase MnmA (408 aa).

ATP-binding positions include 27-34 (AMSGGVDS) and leucine 53. Catalysis depends on cysteine 121, which acts as the Nucleophile. Cysteine 121 and cysteine 222 are joined by a disulfide. Glycine 145 contacts ATP. The interaction with tRNA stretch occupies residues 172 to 174 (RDQ). The Cysteine persulfide intermediate role is filled by cysteine 222.

The protein belongs to the MnmA/TRMU family.

The protein resides in the cytoplasm. It carries out the reaction S-sulfanyl-L-cysteinyl-[protein] + uridine(34) in tRNA + AH2 + ATP = 2-thiouridine(34) in tRNA + L-cysteinyl-[protein] + A + AMP + diphosphate + H(+). In terms of biological role, catalyzes the 2-thiolation of uridine at the wobble position (U34) of tRNA, leading to the formation of s(2)U34. The protein is tRNA-specific 2-thiouridylase MnmA of Rhizobium etli (strain CIAT 652).